The sequence spans 768 residues: Endoplasmin homolog (768 aa).

Residues 1-28 form the signal peptide; sequence MKSITKIFLILGLFAFLLVAFAPSSSVA. ATP contacts are provided by Asn-83, Asp-127, Asn-140, and Phe-173. A glycan (N-linked (GlcNAc...) asparagine) is linked at Asn-83. Residues 266–276 show a composition bias toward basic and acidic residues; the sequence is KEEQEDSKPIT. The tract at residues 266–308 is disordered; sequence KEEQEDSKPITDDQVEETTTTTEEGEEETTTEEEGQTEEKKTK. Residues 288 to 301 show a composition bias toward acidic residues; that stretch reads EEGEEETTTEEEGQ. 2 N-linked (GlcNAc...) asparagine glycosylation sites follow: Asn-317 and Asn-423. Residues 733–743 are compositionally biased toward polar residues; it reads ETTKNENSGPS. The disordered stretch occupies residues 733-768; sequence ETTKNENSGPSVSFGDDDENQQQDFQQPPQSTHDEL. Residues 765–768 carry the Prevents secretion from ER motif; sequence HDEL.

Belongs to the heat shock protein 90 family. In terms of processing, phosphorylated.

It localises to the endoplasmic reticulum. The protein localises to the golgi apparatus. In terms of biological role, may play a role in late differentiation as well as in starvation response. When overexpressed, suppresses the ability to form normal fruiting bodies and impairs prespore differentiation as well as maturation into spores. This chain is Endoplasmin homolog (grp94), found in Dictyostelium discoideum (Social amoeba).